A 551-amino-acid chain; its full sequence is Palatinase (551 aa).

Asp-201 serves as the catalytic Nucleophile. Glu-243 acts as the Proton donor in catalysis.

This sequence belongs to the glycosyl hydrolase 13 family.

The enzyme catalyses 6-O-alpha-D-glucopyranosyl-D-fructose + H2O = alpha-D-glucose + D-fructose. It functions in the pathway glycan degradation; palatinose degradation. Its function is as follows. Catalyzes the hydrolysis of palatinose. Shows a strict specificity toward palatinose, and cannot release glucose from the disaccharides sucrose, maltose, trehalose and melibiose. Involved in the degradation of palatinose, a sucrose isomer that is formed as a reserve material under conditions of excess carbon availability, sequestered in a form unavailable to competitors such as fungi or the host plant, and whose consumption appears to be postponed until the preferentially metabolized carbon source (e.g. sucrose) is depleted. The sequence is that of Palatinase from Erwinia rhapontici (Pectobacterium rhapontici).